The primary structure comprises 86 residues: Small ribosomal subunit protein uS17 (86 aa).

It belongs to the universal ribosomal protein uS17 family. Part of the 30S ribosomal subunit.

Its function is as follows. One of the primary rRNA binding proteins, it binds specifically to the 5'-end of 16S ribosomal RNA. The protein is Small ribosomal subunit protein uS17 of Streptococcus equi subsp. equi (strain 4047).